We begin with the raw amino-acid sequence, 584 residues long: Aspartate--tRNA(Asp/Asn) ligase (584 aa).

Glu177 lines the L-aspartate pocket. An aspartate region spans residues Gln201–Lys204. Arg223 serves as a coordination point for L-aspartate. Residues Arg223–Glu225 and Gln232 contribute to the ATP site. His447 provides a ligand contact to L-aspartate. Glu481 lines the ATP pocket. Position 488 (Arg488) interacts with L-aspartate. Gly533 to Arg536 serves as a coordination point for ATP.

The protein belongs to the class-II aminoacyl-tRNA synthetase family. Type 1 subfamily. As to quaternary structure, homodimer.

Its subcellular location is the cytoplasm. It catalyses the reaction tRNA(Asx) + L-aspartate + ATP = L-aspartyl-tRNA(Asx) + AMP + diphosphate. Its function is as follows. Aspartyl-tRNA synthetase with relaxed tRNA specificity since it is able to aspartylate not only its cognate tRNA(Asp) but also tRNA(Asn). Reaction proceeds in two steps: L-aspartate is first activated by ATP to form Asp-AMP and then transferred to the acceptor end of tRNA(Asp/Asn). The sequence is that of Aspartate--tRNA(Asp/Asn) ligase from Chlamydia abortus (strain DSM 27085 / S26/3) (Chlamydophila abortus).